Consider the following 236-residue polypeptide: Probable 6-phosphogluconolactonase (236 aa).

This sequence belongs to the glucosamine/galactosamine-6-phosphate isomerase family. 6-phosphogluconolactonase subfamily.

The enzyme catalyses 6-phospho-D-glucono-1,5-lactone + H2O = 6-phospho-D-gluconate + H(+). The protein operates within carbohydrate degradation; pentose phosphate pathway; D-ribulose 5-phosphate from D-glucose 6-phosphate (oxidative stage): step 2/3. In terms of biological role, hydrolysis of 6-phosphogluconolactone to 6-phosphogluconate. This is Probable 6-phosphogluconolactonase (pgl) from Dictyostelium discoideum (Social amoeba).